Reading from the N-terminus, the 684-residue chain is Cyclic nucleotide-gated channel alpha-1 (684 aa).

Residues 1-161 are Cytoplasmic-facing; it reads MKTNIINTWH…PSGNTYYNWL (161 aa). The segment at 34 to 145 is disordered; sequence ACSSFSDDDN…TKEKKEEEKK (112 aa). Over residues 39–54 the composition is skewed to acidic residues; that stretch reads SDDDNGSLSEESENED. The span at 105 to 145 shows a compositional bias: basic and acidic residues; that stretch reads SKADDKNENKKDPEKKKKKEKEKEKKKKEEKTKEKKEEEKK. Residues 162 to 183 form a helical membrane-spanning segment; sequence FCITLPVMYNWTMIIARACFDE. Topologically, residues 184–193 are extracellular; the sequence is LQSDYLEYWL. A helical transmembrane segment spans residues 194-214; that stretch reads IFDYVSDVVYLADMFVRTRTG. Over 215–239 the chain is Cytoplasmic; the sequence is YLEQGLLVKDRMKLIEKYKANLQFK. The helical transmembrane segment at 240-258 threads the bilayer; that stretch reads LDVLSVIPTDLLYIKFGWN. Residues 259–263 lie on the Extracellular side of the membrane; that stretch reads YPEIR. The chain crosses the membrane as a helical span at residues 264–282; sequence LNRLLRISRMFEFFQRTET. Topologically, residues 283-289 are cytoplasmic; that stretch reads RTNYPNI. The segment at 287–395 is ion conduction pathway; it reads PNIFRISNLV…GNIGSMISNM (109 aa). Residues 290–313 form a helical membrane-spanning segment; it reads FRISNLVMYIVIIIHWNACVYYSI. At 314 to 336 the chain is on the extracellular side; it reads SKAIGFGNDTWVYPDVNDPEFGR. The N-linked (GlcNAc...) asparagine glycan is linked to N321. The next 2 helical transmembrane spans lie at 337-371 and 372-396; these read LARKYVYSLYWSTLTLTTIGETPPPVLDSEYIFVV and VDFLIGVLIFATIVGNIGSMISNMN. The selectivity filter stretch occupies residues 354–357; that stretch reads TIGE. Residues 397-473 are C-linker; it reads AARAEFQSRV…DTLKKVRIFA (77 aa). Residues 397-684 lie on the Cytoplasmic side of the membrane; it reads AARAEFQSRV…ESELTESLQD (288 aa). Residues 477–597 are cyclic nucleotide-binding domain; that stretch reads AGLLVELVLK…EEKGRQILMK (121 aa). The 3',5'-cyclic GMP site is built by G537, S540, R553, and T554. 3',5'-cyclic AMP contacts are provided by R553 and T554. Residues 615–669 adopt a coiled-coil conformation; that stretch reads LEEKVTRMEGSVDLLQTRFARILAEYESMQQKLKQRLTKVEKFLKPLIETEFSAL.

The protein belongs to the cyclic nucleotide-gated cation channel (TC 1.A.1.5) family. CNGA1 subfamily. Forms heterotetrameric channels composed of CNGA1 and CNGB1 subunits with 3:1 stoichiometry. May also form cyclic nucleotide-activated homotetrameric channels, that are efficiently activated by saturating cGMP, but poorly activated by saturating cAMP compared to the heterotetramer with CNGB1. The channel binds Ca(2+)-bound CALM1 via CaM1 and CaM2 regions of the CNGB1 subunit; this interaction modulates the affinity of the channel for cNMPs in response to intracellular Ca(2+) levels. Rod cells in the retina and inner medulla of kidney.

It is found in the cell membrane. The catalysed reaction is Ca(2+)(in) = Ca(2+)(out). The enzyme catalyses Na(+)(in) = Na(+)(out). It catalyses the reaction K(+)(in) = K(+)(out). It carries out the reaction NH4(+)(in) = NH4(+)(out). The catalysed reaction is Rb(+)(in) = Rb(+)(out). The enzyme catalyses Li(+)(in) = Li(+)(out). It catalyses the reaction Cs(+)(in) = Cs(+)(out). In terms of biological role, pore-forming subunit of the rod cyclic nucleotide-gated channel. Mediates rod photoresponses at dim light converting transient changes in intracellular cGMP levels into electrical signals. In the dark, cGMP levels are high and keep the channel open enabling a steady inward current carried by Na(+) and Ca(2+) ions that leads to membrane depolarization and neurotransmitter release from synaptic terminals. Upon photon absorption cGMP levels decline leading to channel closure and membrane hyperpolarization that ultimately slows neurotransmitter release and signals the presence of light, the end point of the phototransduction cascade. Conducts cGMP- and cAMP-gated ion currents, with permeability for monovalent and divalent cations. The selectivity for Ca(2+) over Na(+) increases with cGMP concentrations, whereas the selectivity among monovalent ions is independent of the cGMP levels. This chain is Cyclic nucleotide-gated channel alpha-1 (Cnga1), found in Mus musculus (Mouse).